An 84-amino-acid polypeptide reads, in one-letter code: Small ribosomal subunit protein uS17 (84 aa).

Belongs to the universal ribosomal protein uS17 family. In terms of assembly, part of the 30S ribosomal subunit.

In terms of biological role, one of the primary rRNA binding proteins, it binds specifically to the 5'-end of 16S ribosomal RNA. This is Small ribosomal subunit protein uS17 from Serratia proteamaculans (strain 568).